Reading from the N-terminus, the 115-residue chain is MTLLFKLVKIAILVFLMVIGFFIFIGSFWLNTYQTAQWADLLASSDASGIILTIFPNINSWFNATVANQPVLFKTMVHFFIPVGFGLLFGLIIAIIVDILYRLTKYAIKRSYQSN.

3 helical membrane passes run 10–30 (IAIL…SFWL), 47–67 (ASGI…ATVA), and 77–97 (VHFF…AIIV).

Its subcellular location is the cell membrane. This is an uncharacterized protein from Mycoplasma genitalium (strain ATCC 33530 / DSM 19775 / NCTC 10195 / G37) (Mycoplasmoides genitalium).